Reading from the N-terminus, the 75-residue chain is Large ribosomal subunit protein bL32c (75 aa).

Residues Ser49–Thr75 form a disordered region. Over residues Asn59–Thr75 the composition is skewed to basic residues.

The protein belongs to the bacterial ribosomal protein bL32 family.

Its subcellular location is the plastid. It localises to the chloroplast. The protein is Large ribosomal subunit protein bL32c of Nephroselmis olivacea (Green alga).